A 490-amino-acid polypeptide reads, in one-letter code: Betaine aldehyde dehydrogenase (490 aa).

Residues I27 and D93 each contribute to the K(+) site. An NAD(+)-binding site is contributed by 150-152 (GAW). Residue K162 is the Charge relay system of the active site. 176–179 (KPSE) contributes to the NAD(+) binding site. V180 contacts K(+). 230-233 (GTTT) is a binding site for NAD(+). Position 246 (L246) interacts with K(+). E252 (proton acceptor) is an active-site residue. The NAD(+) site is built by G254, C286, and E387. The Nucleophile role is filled by C286. C286 bears the Cysteine sulfenic acid (-SOH) mark. K457 and G460 together coordinate K(+). E464 serves as the catalytic Charge relay system.

It belongs to the aldehyde dehydrogenase family. In terms of assembly, dimer of dimers. K(+) is required as a cofactor.

It catalyses the reaction betaine aldehyde + NAD(+) + H2O = glycine betaine + NADH + 2 H(+). Its pathway is amine and polyamine biosynthesis; betaine biosynthesis via choline pathway; betaine from betaine aldehyde: step 1/1. Involved in the biosynthesis of the osmoprotectant glycine betaine. Catalyzes the irreversible oxidation of betaine aldehyde to the corresponding acid. This is Betaine aldehyde dehydrogenase from Pseudomonas entomophila (strain L48).